The following is a 397-amino-acid chain: Elongation factor Tu (397 aa).

Residues 10 to 206 (KPHVNIGTIG…AIDSYIPTPE (197 aa)) form the tr-type G domain. The G1 stretch occupies residues 19-26 (GHVDHGKT). 19-26 (GHVDHGKT) contributes to the GTP binding site. Thr26 provides a ligand contact to Mg(2+). The tract at residues 60 to 64 (GITIN) is G2. Residues 81–84 (DCPG) are G3. Residues 81–85 (DCPGH) and 136–139 (NKAD) contribute to the GTP site. The interval 136 to 139 (NKAD) is G4. The interval 174 to 176 (SAL) is G5.

Belongs to the TRAFAC class translation factor GTPase superfamily. Classic translation factor GTPase family. EF-Tu/EF-1A subfamily. In terms of assembly, monomer.

Its subcellular location is the cytoplasm. The catalysed reaction is GTP + H2O = GDP + phosphate + H(+). In terms of biological role, GTP hydrolase that promotes the GTP-dependent binding of aminoacyl-tRNA to the A-site of ribosomes during protein biosynthesis. The sequence is that of Elongation factor Tu from Clostridium botulinum (strain Loch Maree / Type A3).